The chain runs to 196 residues: DnaA initiator-associating protein DiaA (196 aa).

The 163-residue stretch at 34–196 (MVQSLLNGNK…DNTLFPHQDD (163 aa)) folds into the SIS domain.

Belongs to the SIS family. DiaA subfamily. In terms of assembly, homotetramer; dimer of dimers.

Its function is as follows. Required for the timely initiation of chromosomal replication via direct interactions with the DnaA initiator protein. The chain is DnaA initiator-associating protein DiaA from Photorhabdus laumondii subsp. laumondii (strain DSM 15139 / CIP 105565 / TT01) (Photorhabdus luminescens subsp. laumondii).